The sequence spans 506 residues: MLYAAPGTADAIFAFKPRYDNFIDGTWQPPVRGEYFDNVTPITGKVFCKAARSTEEDITLALDAAHAAADRWGRTTAAERALILNRIADRLQDNLETLAYVESIDNGKPIRETLAADIPLAIDHFRYFAACIRAQEGSLSQIDETTIAYHFNEPLGVVGQIIPWNFPILMATWKLAPALAAGNCIVLKPAEQTPISILVLTELIADLLPPGVLNVVNGFGLEAGKPLASSKRIAKIAFTGETATGRLIMQYASQNLIPVTLELGGKSPNVFFDDIASADDSFFDKAVEGFVMFALNQGEICTCPSRALIHESLYDRFIERALARVAVIKQGSPLDTETMIGAQASTEQMDKILSYMDIGREEGATVLAGGARAELGGELDGGYYVQPTVFKGNNSMRIFQEEIFGPVVAVTTFKDEDEALHLANDTHYGLGSGVWTRDGNRAFRFGRGIKAGRVWTNCYHLYPAHAAFGGYKQSGIGRENHHMMLDHYQQTKNLLVSYDPKAMGFF.

218–224 (GFGLEAG) contributes to the NAD(+) binding site. Catalysis depends on residues Glu-262 and Cys-301.

It belongs to the aldehyde dehydrogenase family.

The catalysed reaction is an aldehyde + NAD(+) + H2O = a carboxylate + NADH + 2 H(+). In Rhodospirillum rubrum (strain ATCC 11170 / ATH 1.1.1 / DSM 467 / LMG 4362 / NCIMB 8255 / S1), this protein is Aldehyde dehydrogenase.